A 533-amino-acid chain; its full sequence is E3 ubiquitin-protein ligase arih1l (533 aa).

Disordered regions lie at residues 1–35 (MDSD…EAVD) and 48–73 (PAVA…QEDE). Residues 158–369 (QDLPCQICYL…SAWYNCNRYN (212 aa)) are TRIAD supradomain. Cys162, Cys165, Cys179, His181, Cys184, Cys187, Cys207, Cys212, Cys252, Cys257, Cys273, Cys275, Cys280, Cys283, His288, Cys293, Cys320, and Cys323 together coordinate Zn(2+). The segment at 162 to 212 (CQICYLNYPNSYFTGLECGHKFCMQCWGDYLTTKIIEEGMGQTISCPAHNC) adopts an RING-type 1 zinc-finger fold. The IBR-type zinc finger occupies 232–293 (LKYQHLITNS…GENWHDPVKC (62 aa)). An RING-type 2; atypical zinc finger spans residues 320 to 351 (CPKCHVTIEKDGGCNHMVCRNQNCKAEFCWVC). Cys333 is a catalytic residue. Zn(2+) is bound by residues Cys338, Cys343, Cys348, Cys351, His358, and Cys365. The stretch at 409 to 425 (KLYAQVKQKMEEMQQHN) forms a coiled coil.

It belongs to the RBR family. Ariadne subfamily.

It is found in the cytoplasm. The catalysed reaction is [E2 ubiquitin-conjugating enzyme]-S-ubiquitinyl-L-cysteine + [acceptor protein]-L-lysine = [E2 ubiquitin-conjugating enzyme]-L-cysteine + [acceptor protein]-N(6)-ubiquitinyl-L-lysine.. Its pathway is protein modification; protein ubiquitination. In terms of biological role, E3 ubiquitin-protein ligase, which catalyzes polyubiquitination of target proteins together with ubiquitin-conjugating enzyme E2 ube2l3. The chain is E3 ubiquitin-protein ligase arih1l (arih1l) from Danio rerio (Zebrafish).